The primary structure comprises 906 residues: Rho GTPase-activating protein gacJ (906 aa).

Residues 53–117 are disordered; sequence LEGHLNPSSH…RDNSRSDNIR (65 aa). Positions 69–79 are enriched in low complexity; the sequence is NNNNNNNNNNN. Residues 92-117 show a composition bias toward basic and acidic residues; the sequence is SRSDSKHHNRENSKSDRDNSRSDNIR. Positions 161 to 348 constitute a Rho-GAP domain; that stretch reads EELQSLYPDQ…YMLEYFNDIF (188 aa). Disordered regions lie at residues 368–415, 452–864, and 877–906; these read DTTS…SRSK, EIIP…SVLT, and ANQA…NINK. Over residues 381–404 the composition is skewed to polar residues; the sequence is NGGSPRTSNTPYQQQHQLSSQSMA. Over residues 461–487 the composition is skewed to low complexity; the sequence is TTTTTTTTTNTTTTTTTTNTTPNNTTT. Composition is skewed to pro residues over residues 494–510 and 547–560; these read PVPP…PPNP and QPPP…PSPP. The span at 565-574 shows a compositional bias: polar residues; the sequence is KPTSKSDFIP. 2 stretches are compositionally biased toward low complexity: residues 575-597 and 613-629; these read STNN…SIPK and IEEP…TTTT. A compositionally biased stretch (polar residues) spans 637 to 649; sequence FKNNGTISSGSKS. Low complexity-rich tracts occupy residues 650-663 and 683-694; these read NPNL…NQPL and SKPITTTPTIKK. Residues 708-721 are compositionally biased toward pro residues; sequence PPSPSSSSPSPPHN. 3 stretches are compositionally biased toward low complexity: residues 754-772, 785-816, and 844-861; these read PTIP…PTTP, PPIN…STPK, and SSPT…SSPS. Residues 880-890 show a composition bias toward polar residues; that stretch reads AKKNPLSNSGG.

The protein resides in the cytoplasm. Functionally, rho GTPase-activating protein involved in the signal transduction pathway. This Dictyostelium discoideum (Social amoeba) protein is Rho GTPase-activating protein gacJ (gacJ).